A 333-amino-acid polypeptide reads, in one-letter code: Holliday junction branch migration complex subunit RuvB (333 aa).

Residues 1–181 (MNDILNKEPM…FGISSHMEYY (181 aa)) are large ATPase domain (RuvB-L). ATP is bound by residues L20, R21, G62, K65, T66, T67, 128-130 (EDF), R171, Y181, and R218. A Mg(2+)-binding site is contributed by T66. The small ATPAse domain (RuvB-S) stretch occupies residues 182 to 252 (QERDLEEIVK…ITDKALSILD (71 aa)). Residues 255–333 (AAGLDYIDQK…HLGYVYNEED (79 aa)) form a head domain (RuvB-H) region. DNA is bound by residues R291, R310, and R315.

The protein belongs to the RuvB family. Homohexamer. Forms an RuvA(8)-RuvB(12)-Holliday junction (HJ) complex. HJ DNA is sandwiched between 2 RuvA tetramers; dsDNA enters through RuvA and exits via RuvB. An RuvB hexamer assembles on each DNA strand where it exits the tetramer. Each RuvB hexamer is contacted by two RuvA subunits (via domain III) on 2 adjacent RuvB subunits; this complex drives branch migration. In the full resolvosome a probable DNA-RuvA(4)-RuvB(12)-RuvC(2) complex forms which resolves the HJ.

Its subcellular location is the cytoplasm. The catalysed reaction is ATP + H2O = ADP + phosphate + H(+). The RuvA-RuvB-RuvC complex processes Holliday junction (HJ) DNA during genetic recombination and DNA repair, while the RuvA-RuvB complex plays an important role in the rescue of blocked DNA replication forks via replication fork reversal (RFR). RuvA specifically binds to HJ cruciform DNA, conferring on it an open structure. The RuvB hexamer acts as an ATP-dependent pump, pulling dsDNA into and through the RuvAB complex. RuvB forms 2 homohexamers on either side of HJ DNA bound by 1 or 2 RuvA tetramers; 4 subunits per hexamer contact DNA at a time. Coordinated motions by a converter formed by DNA-disengaged RuvB subunits stimulates ATP hydrolysis and nucleotide exchange. Immobilization of the converter enables RuvB to convert the ATP-contained energy into a lever motion, pulling 2 nucleotides of DNA out of the RuvA tetramer per ATP hydrolyzed, thus driving DNA branch migration. The RuvB motors rotate together with the DNA substrate, which together with the progressing nucleotide cycle form the mechanistic basis for DNA recombination by continuous HJ branch migration. Branch migration allows RuvC to scan DNA until it finds its consensus sequence, where it cleaves and resolves cruciform DNA. This is Holliday junction branch migration complex subunit RuvB from Lactococcus lactis subsp. lactis (strain IL1403) (Streptococcus lactis).